The primary structure comprises 233 residues: Small ribosomal subunit protein uS2 (233 aa).

The protein belongs to the universal ribosomal protein uS2 family.

This is Small ribosomal subunit protein uS2 from Bacillus anthracis.